The chain runs to 412 residues: LL-diaminopimelate aminotransferase (412 aa).

Residues Tyr-15 and Gly-42 each coordinate substrate. Residues Tyr-72, 108 to 109, Tyr-132, Asn-187, Tyr-218, and 246 to 248 contribute to the pyridoxal 5'-phosphate site; these read SK and SFS. Substrate-binding residues include Lys-109, Tyr-132, and Asn-187. Position 249 is an N6-(pyridoxal phosphate)lysine (Lys-249). The pyridoxal 5'-phosphate site is built by Arg-257 and Asn-292. Substrate-binding residues include Asn-292 and Arg-388.

This sequence belongs to the class-I pyridoxal-phosphate-dependent aminotransferase family. LL-diaminopimelate aminotransferase subfamily. As to quaternary structure, homodimer. Requires pyridoxal 5'-phosphate as cofactor.

It carries out the reaction (2S,6S)-2,6-diaminopimelate + 2-oxoglutarate = (S)-2,3,4,5-tetrahydrodipicolinate + L-glutamate + H2O + H(+). The protein operates within amino-acid biosynthesis; L-lysine biosynthesis via DAP pathway; LL-2,6-diaminopimelate from (S)-tetrahydrodipicolinate (aminotransferase route): step 1/1. Functionally, involved in the synthesis of meso-diaminopimelate (m-DAP or DL-DAP), required for both lysine and peptidoglycan biosynthesis. Catalyzes the direct conversion of tetrahydrodipicolinate to LL-diaminopimelate. This chain is LL-diaminopimelate aminotransferase, found in Synechocystis sp. (strain ATCC 27184 / PCC 6803 / Kazusa).